The primary structure comprises 479 residues: Protein nucleotidyltransferase YdiU (479 aa).

ATP is bound by residues G83, G85, R86, K106, D118, G119, R169, and R176. Catalysis depends on D245, which acts as the Proton acceptor. Residues N246 and D255 each coordinate Mg(2+). D255 provides a ligand contact to ATP.

This sequence belongs to the SELO family. Mg(2+) is required as a cofactor. It depends on Mn(2+) as a cofactor.

The catalysed reaction is L-seryl-[protein] + ATP = 3-O-(5'-adenylyl)-L-seryl-[protein] + diphosphate. The enzyme catalyses L-threonyl-[protein] + ATP = 3-O-(5'-adenylyl)-L-threonyl-[protein] + diphosphate. It catalyses the reaction L-tyrosyl-[protein] + ATP = O-(5'-adenylyl)-L-tyrosyl-[protein] + diphosphate. It carries out the reaction L-histidyl-[protein] + UTP = N(tele)-(5'-uridylyl)-L-histidyl-[protein] + diphosphate. The catalysed reaction is L-seryl-[protein] + UTP = O-(5'-uridylyl)-L-seryl-[protein] + diphosphate. The enzyme catalyses L-tyrosyl-[protein] + UTP = O-(5'-uridylyl)-L-tyrosyl-[protein] + diphosphate. Its function is as follows. Nucleotidyltransferase involved in the post-translational modification of proteins. It can catalyze the addition of adenosine monophosphate (AMP) or uridine monophosphate (UMP) to a protein, resulting in modifications known as AMPylation and UMPylation. This chain is Protein nucleotidyltransferase YdiU, found in Erwinia tasmaniensis (strain DSM 17950 / CFBP 7177 / CIP 109463 / NCPPB 4357 / Et1/99).